Reading from the N-terminus, the 191-residue chain is Large ribosomal subunit protein bL9 (191 aa).

A disordered region spans residues 171-191 (EDALKPEDFFNPEAELESEEE).

Belongs to the bacterial ribosomal protein bL9 family.

Binds to the 23S rRNA. The sequence is that of Large ribosomal subunit protein bL9 from Rhizobium meliloti (strain 1021) (Ensifer meliloti).